We begin with the raw amino-acid sequence, 557 residues long: Dihydroxy-acid dehydratase (557 aa).

Cys-50 serves as a coordination point for [2Fe-2S] cluster. Asp-82 is a binding site for Mg(2+). Cys-123 provides a ligand contact to [2Fe-2S] cluster. Residues Asp-124 and Lys-125 each contribute to the Mg(2+) site. Lys-125 is subject to N6-carboxylysine. Cys-195 provides a ligand contact to [2Fe-2S] cluster. Glu-447 is a Mg(2+) binding site. The active-site Proton acceptor is Ser-473.

The protein belongs to the IlvD/Edd family. As to quaternary structure, homodimer. [2Fe-2S] cluster serves as cofactor. It depends on Mg(2+) as a cofactor.

It carries out the reaction (2R)-2,3-dihydroxy-3-methylbutanoate = 3-methyl-2-oxobutanoate + H2O. The catalysed reaction is (2R,3R)-2,3-dihydroxy-3-methylpentanoate = (S)-3-methyl-2-oxopentanoate + H2O. It functions in the pathway amino-acid biosynthesis; L-isoleucine biosynthesis; L-isoleucine from 2-oxobutanoate: step 3/4. It participates in amino-acid biosynthesis; L-valine biosynthesis; L-valine from pyruvate: step 3/4. Functions in the biosynthesis of branched-chain amino acids. Catalyzes the dehydration of (2R,3R)-2,3-dihydroxy-3-methylpentanoate (2,3-dihydroxy-3-methylvalerate) into 2-oxo-3-methylpentanoate (2-oxo-3-methylvalerate) and of (2R)-2,3-dihydroxy-3-methylbutanoate (2,3-dihydroxyisovalerate) into 2-oxo-3-methylbutanoate (2-oxoisovalerate), the penultimate precursor to L-isoleucine and L-valine, respectively. This Burkholderia thailandensis (strain ATCC 700388 / DSM 13276 / CCUG 48851 / CIP 106301 / E264) protein is Dihydroxy-acid dehydratase.